A 410-amino-acid chain; its full sequence is Cytochrome P450 CYP107DY1 (410 aa).

Residues His-106 and Arg-110 each contribute to the heme site. Substrate contacts are provided by Thr-249 and Glu-253. The heme site is built by Arg-302, His-358, and Cys-360.

It belongs to the cytochrome P450 family. Requires heme as cofactor.

The catalysed reaction is mevastatin + 2 reduced [2Fe-2S]-[ferredoxin] + O2 + 2 H(+) = pravastatin lactone + 2 oxidized [2Fe-2S]-[ferredoxin] + H2O. In terms of biological role, cytochrome P450 whose physiological substrate is unknown. In vitro, is able to catalyze the selective hydroxylation of mevastatin to pravastatin, the widely used therapeutic agent for hypercholesterolemia. The sequence is that of Cytochrome P450 CYP107DY1 from Priestia megaterium (strain ATCC 12872 / QMB1551) (Bacillus megaterium).